The sequence spans 437 residues: Putative metabolite transport protein NicT (437 aa).

Transmembrane regions (helical) follow at residues 28–48 (LIPF…NVGF), 66–86 (LGAG…NLIL), 93–113 (LWIA…MFVT), 123–143 (FLLG…LTMW), 152–172 (IIAL…PISG), 189–209 (WLFL…FWAL), 254–274 (VWML…MGFW), 290–310 (IGLL…MIGA), 320–340 (WHII…TLFS), 347–367 (VVLF…FFSL), 374–394 (GTAA…AGLV), and 411–431 (AALW…IALP).

It belongs to the major facilitator superfamily.

The protein localises to the membrane. Functionally, probable transporter, possibly involved in the aerobic nicotinate degradation pathway. In Pseudomonas putida (strain ATCC 47054 / DSM 6125 / CFBP 8728 / NCIMB 11950 / KT2440), this protein is Putative metabolite transport protein NicT (nicT).